The following is a 427-amino-acid chain: Putative FBD-associated F-box protein At3g50710 (427 aa).

One can recognise an F-box domain in the interval 1–53 (MDRISNLSDDLLLKIVSSLPTKDVVVTMLLSKRWKFLWMMVPKLRFDDEFELE). In terms of domain architecture, FBD spans 345-395 (HWEEPSSVPQCLLFHLNIFEWKYYNAGDEEKKVVAYILKNARQLKTATFSA).

This is Putative FBD-associated F-box protein At3g50710 from Arabidopsis thaliana (Mouse-ear cress).